Reading from the N-terminus, the 172-residue chain is ATP synthase subunit b (172 aa).

The chain crosses the membrane as a helical span at residues 11–30; that stretch reads LIAQIINFVIVLWVLNRFAF.

This sequence belongs to the ATPase B chain family. As to quaternary structure, F-type ATPases have 2 components, F(1) - the catalytic core - and F(0) - the membrane proton channel. F(1) has five subunits: alpha(3), beta(3), gamma(1), delta(1), epsilon(1). F(0) has three main subunits: a(1), b(2) and c(10-14). The alpha and beta chains form an alternating ring which encloses part of the gamma chain. F(1) is attached to F(0) by a central stalk formed by the gamma and epsilon chains, while a peripheral stalk is formed by the delta and b chains.

It is found in the cell inner membrane. Functionally, f(1)F(0) ATP synthase produces ATP from ADP in the presence of a proton or sodium gradient. F-type ATPases consist of two structural domains, F(1) containing the extramembraneous catalytic core and F(0) containing the membrane proton channel, linked together by a central stalk and a peripheral stalk. During catalysis, ATP synthesis in the catalytic domain of F(1) is coupled via a rotary mechanism of the central stalk subunits to proton translocation. Component of the F(0) channel, it forms part of the peripheral stalk, linking F(1) to F(0). This chain is ATP synthase subunit b, found in Methylacidiphilum infernorum (isolate V4) (Methylokorus infernorum (strain V4)).